We begin with the raw amino-acid sequence, 194 residues long: Orotate phosphoribosyltransferase (194 aa).

Residue 114-122 (EDVVTTGKS) coordinates 5-phospho-alpha-D-ribose 1-diphosphate. Orotate-binding residues include threonine 118 and arginine 146.

Belongs to the purine/pyrimidine phosphoribosyltransferase family. PyrE subfamily. As to quaternary structure, homodimer. The cofactor is Mg(2+).

It carries out the reaction orotidine 5'-phosphate + diphosphate = orotate + 5-phospho-alpha-D-ribose 1-diphosphate. The protein operates within pyrimidine metabolism; UMP biosynthesis via de novo pathway; UMP from orotate: step 1/2. Catalyzes the transfer of a ribosyl phosphate group from 5-phosphoribose 1-diphosphate to orotate, leading to the formation of orotidine monophosphate (OMP). The sequence is that of Orotate phosphoribosyltransferase from Clostridioides difficile (strain 630) (Peptoclostridium difficile).